A 101-amino-acid chain; its full sequence is Large ribosomal subunit protein uL24 (101 aa).

This sequence belongs to the universal ribosomal protein uL24 family. As to quaternary structure, part of the 50S ribosomal subunit.

One of two assembly initiator proteins, it binds directly to the 5'-end of the 23S rRNA, where it nucleates assembly of the 50S subunit. Functionally, one of the proteins that surrounds the polypeptide exit tunnel on the outside of the subunit. This is Large ribosomal subunit protein uL24 from Streptococcus pyogenes serotype M1.